We begin with the raw amino-acid sequence, 319 residues long: Putative peptide permease protein BOV_A0351 (319 aa).

The next 6 membrane-spanning stretches (helical) occupy residues 9–29, 102–122, 138–158, 182–202, 242–262, and 284–304; these read LLIG…LLQL, LLLM…TGII, LALL…LYVF, LLRH…ALIM, LPVV…AIFI, and YPVI…VNIL. Residues 98-305 form the ABC transmembrane type-1 domain; it reads IGPTLLLMAA…ACVIIVNILT (208 aa).

This sequence belongs to the binding-protein-dependent transport system permease family. The complex is composed of two ATP-binding proteins (BOV_A0347 and BOV_A0348), two transmembrane proteins (BOV_A0350 and BOV_A0351) and a solute-binding protein (BOV_A0352).

It localises to the cell inner membrane. Probably part of an ABC transporter complex that could be involved in peptide import. Probably responsible for the translocation of the substrate across the membrane. This Brucella ovis (strain ATCC 25840 / 63/290 / NCTC 10512) protein is Putative peptide permease protein BOV_A0351.